Consider the following 445-residue polypeptide: Tubulin beta-9 chain (445 aa).

Residues Gln11, Glu69, Ser138, Gly142, Thr143, Gly144, Asn204, and Asn226 each coordinate GTP. Position 69 (Glu69) interacts with Mg(2+). The disordered stretch occupies residues 423-445; that stretch reads QQYQDATADDEEYEEEEEYEAEA. Over residues 429–445 the composition is skewed to acidic residues; that stretch reads TADDEEYEEEEEYEAEA.

Belongs to the tubulin family. In terms of assembly, dimer of alpha and beta chains. A typical microtubule is a hollow water-filled tube with an outer diameter of 25 nm and an inner diameter of 15 nM. Alpha-beta heterodimers associate head-to-tail to form protofilaments running lengthwise along the microtubule wall with the beta-tubulin subunit facing the microtubule plus end conferring a structural polarity. Microtubules usually have 13 protofilaments but different protofilament numbers can be found in some organisms and specialized cells. Mg(2+) serves as cofactor.

It is found in the cytoplasm. The protein localises to the cytoskeleton. Tubulin is the major constituent of microtubules, a cylinder consisting of laterally associated linear protofilaments composed of alpha- and beta-tubulin heterodimers. Microtubules grow by the addition of GTP-tubulin dimers to the microtubule end, where a stabilizing cap forms. Below the cap, tubulin dimers are in GDP-bound state, owing to GTPase activity of alpha-tubulin. This Gossypium hirsutum (Upland cotton) protein is Tubulin beta-9 chain.